A 359-amino-acid chain; its full sequence is Serine hydrolase-like protein DDB_G0286239 (359 aa).

In terms of domain architecture, AB hydrolase-1 spans 38-289 (LALHGWLDNA…VPGSHHFHME (252 aa)). Residue serine 111 is part of the active site. The interval 310–359 (FTPSSTTQQQQQQQQSAENKKGDNHNQIAEQDLSTSNTSSPIISKPKPNL) is disordered. Over residues 334 to 351 (HNQIAEQDLSTSNTSSPI) the composition is skewed to polar residues.

Belongs to the AB hydrolase superfamily.

Its function is as follows. Probable serine hydrolase. This is Serine hydrolase-like protein DDB_G0286239 from Dictyostelium discoideum (Social amoeba).